A 130-amino-acid polypeptide reads, in one-letter code: Probable 4-amino-4-deoxy-L-arabinose-phosphoundecaprenol flippase subunit ArnF (130 aa).

Residues 1-4 (MGYG) lie on the Cytoplasmic side of the membrane. Residues 5–25 (WALFSVALVSAAQLLLKWVMM) form a helical membrane-spanning segment. Residues 26-44 (HLPPLGALRLWLDPAYAEP) are Periplasmic-facing. A helical membrane pass occupies residues 45–65 (LALLMGGLLAYVCSMGCWFMA). Residues 66–74 (LRRLPLNKA) are Cytoplasmic-facing. Residues 75–95 (YPLLSLSYVLVAACALMIPEF) form a helical membrane-spanning segment. Topologically, residues 96-103 (NERFTFSR) are periplasmic. A helical transmembrane segment spans residues 104-124 (LMGVALICGGLLLICLPAGGK). Over 125 to 130 (GDTPRR) the chain is Cytoplasmic.

It belongs to the ArnF family. In terms of assembly, heterodimer of ArnE and ArnF.

It localises to the cell inner membrane. It functions in the pathway bacterial outer membrane biogenesis; lipopolysaccharide biosynthesis. Functionally, translocates 4-amino-4-deoxy-L-arabinose-phosphoundecaprenol (alpha-L-Ara4N-phosphoundecaprenol) from the cytoplasmic to the periplasmic side of the inner membrane. This chain is Probable 4-amino-4-deoxy-L-arabinose-phosphoundecaprenol flippase subunit ArnF, found in Sodalis glossinidius (strain morsitans).